The sequence spans 185 residues: Crossover junction endodeoxyribonuclease RuvC (185 aa).

Active-site residues include Asp-7, Glu-66, and Asp-137. Positions 7, 66, and 137 each coordinate Mg(2+).

The protein belongs to the RuvC family. In terms of assembly, homodimer which binds Holliday junction (HJ) DNA. The HJ becomes 2-fold symmetrical on binding to RuvC with unstacked arms; it has a different conformation from HJ DNA in complex with RuvA. In the full resolvosome a probable DNA-RuvA(4)-RuvB(12)-RuvC(2) complex forms which resolves the HJ. Mg(2+) is required as a cofactor.

It localises to the cytoplasm. It catalyses the reaction Endonucleolytic cleavage at a junction such as a reciprocal single-stranded crossover between two homologous DNA duplexes (Holliday junction).. The RuvA-RuvB-RuvC complex processes Holliday junction (HJ) DNA during genetic recombination and DNA repair. Endonuclease that resolves HJ intermediates. Cleaves cruciform DNA by making single-stranded nicks across the HJ at symmetrical positions within the homologous arms, yielding a 5'-phosphate and a 3'-hydroxyl group; requires a central core of homology in the junction. The consensus cleavage sequence is 5'-(A/T)TT(C/G)-3'. Cleavage occurs on the 3'-side of the TT dinucleotide at the point of strand exchange. HJ branch migration catalyzed by RuvA-RuvB allows RuvC to scan DNA until it finds its consensus sequence, where it cleaves and resolves the cruciform DNA. This Anaeromyxobacter dehalogenans (strain 2CP-1 / ATCC BAA-258) protein is Crossover junction endodeoxyribonuclease RuvC.